The chain runs to 216 residues: Glycerol-3-phosphate acyltransferase (216 aa).

The next 6 membrane-spanning stretches (helical) occupy residues 3-23 (FPIF…YWIA), 48-68 (IGWK…MLPV), 82-102 (FQLL…FLGF), 112-132 (FGVF…VFWV), 142-162 (LGSI…TILL), and 166-186 (EVSY…ILTH).

This sequence belongs to the PlsY family. In terms of assembly, probably interacts with PlsX.

It localises to the cell inner membrane. The catalysed reaction is an acyl phosphate + sn-glycerol 3-phosphate = a 1-acyl-sn-glycero-3-phosphate + phosphate. The protein operates within lipid metabolism; phospholipid metabolism. In terms of biological role, catalyzes the transfer of an acyl group from acyl-phosphate (acyl-PO(4)) to glycerol-3-phosphate (G3P) to form lysophosphatidic acid (LPA). This enzyme utilizes acyl-phosphate as fatty acyl donor, but not acyl-CoA or acyl-ACP. This is Glycerol-3-phosphate acyltransferase from Leptospira interrogans serogroup Icterohaemorrhagiae serovar Lai (strain 56601).